An 884-amino-acid polypeptide reads, in one-letter code: Probable ribonuclease ZC3H12C (884 aa).

The tract at residues 66 to 108 (KPTMDTVNSGKEGKGVSEENVSSGDSEGSTSSDHESEQLSSLS) is disordered. A compositionally biased stretch (low complexity) spans 87–96 (SSGDSEGSTS). A Phosphoserine modification is found at S231. In terms of domain architecture, RNase NYN spans 246-401 (LRPVVIDGSN…LGRHGPSLDN (156 aa)). The segment at 411 to 436 (EHKKQPCPYGKKCTYGHKCKYYHPER) adopts a C3H1-type zinc-finger fold. The segment covering 456–478 (AAKTTNEGGLVKSNSVPCSTKAD) has biased composition (polar residues). Disordered regions lie at residues 456 to 548 (AAKT…SGVH), 716 to 739 (VGARSSCPGDYPSPPSSAHSKAPH), and 755 to 776 (SRLYDSSPSRQRKPYSRQEGLG). Residues 500 to 516 (VYQDIEEKLPTKNKLET) show a composition bias toward basic and acidic residues. A compositionally biased stretch (polar residues) spans 518–543 (SVPSLVSIPATSTAKPQSTTPLSNGL).

Belongs to the ZC3H12 family. Mg(2+) is required as a cofactor.

Its function is as follows. May function as RNase and regulate the levels of target RNA species. The chain is Probable ribonuclease ZC3H12C (Zc3h12c) from Mus musculus (Mouse).